We begin with the raw amino-acid sequence, 288 residues long: MRIRVPATTANLGPGFDSCGLALTLYLTLDIGAEADSWYIEHNIGGGIPHDETNVIIETALNLAPNLTPHHLVMTCDIPPARGLGSSSAAVVAGIELANTLAELKLSKEEKVRIAAEIEGHPDNVAPAVLGNWVVGAKLDGEDFYVRHLFPDCALIAFIPKAELLTSESRGVLPDTLPFKEAVQASSIANVMIAAILRNDMALAGEMMERDLWHEKYRSQLVPHLTQIRDVAKSQGAYAACLSGAGPTVLVFAPRNLANTLQTSLQTLEIDADVLLLDVEGSGAEVFR.

Position 79-89 (79-89 (PPARGLGSSSA)) interacts with ATP.

It belongs to the GHMP kinase family. Homoserine kinase subfamily.

It is found in the cytoplasm. It carries out the reaction L-homoserine + ATP = O-phospho-L-homoserine + ADP + H(+). Its pathway is amino-acid biosynthesis; L-threonine biosynthesis; L-threonine from L-aspartate: step 4/5. Catalyzes the ATP-dependent phosphorylation of L-homoserine to L-homoserine phosphate. The protein is Homoserine kinase of Listeria monocytogenes serotype 4b (strain CLIP80459).